We begin with the raw amino-acid sequence, 123 residues long: Fluoride-specific ion channel FluC 1 (123 aa).

Helical transmembrane passes span 33 to 53 (TFLI…LFGV), 59 to 79 (YGTM…TTFS), and 98 to 118 (VFYL…GAML). Residues Gly-73 and Thr-76 each coordinate Na(+).

Belongs to the fluoride channel Fluc/FEX (TC 1.A.43) family.

It localises to the cell inner membrane. The enzyme catalyses fluoride(in) = fluoride(out). Its activity is regulated as follows. Na(+) is not transported, but it plays an essential structural role and its presence is essential for fluoride channel function. Functionally, fluoride-specific ion channel. Important for reducing fluoride concentration in the cell, thus reducing its toxicity. The polypeptide is Fluoride-specific ion channel FluC 1 (Brucella melitensis biotype 1 (strain ATCC 23456 / CCUG 17765 / NCTC 10094 / 16M)).